The chain runs to 661 residues: UvrABC system protein C (661 aa).

Residues 52 to 130 (HKPGVYRMVD…IKRLHPRFNV (79 aa)) enclose the GIY-YIG domain. The region spanning 240 to 275 (QSIKNDMVQAMHKAAKNFDFEQAAAYRDRLSALSHI) is the UVR domain.

This sequence belongs to the UvrC family. As to quaternary structure, interacts with UvrB in an incision complex.

Its subcellular location is the cytoplasm. The UvrABC repair system catalyzes the recognition and processing of DNA lesions. UvrC both incises the 5' and 3' sides of the lesion. The N-terminal half is responsible for the 3' incision and the C-terminal half is responsible for the 5' incision. This is UvrABC system protein C from Bartonella henselae (strain ATCC 49882 / DSM 28221 / CCUG 30454 / Houston 1) (Rochalimaea henselae).